Consider the following 553-residue polypeptide: Hydroxylamine reductase (553 aa).

4 residues coordinate [2Fe-2S] cluster: cysteine 3, cysteine 6, cysteine 18, and cysteine 25. Hybrid [4Fe-2O-2S] cluster-binding residues include histidine 252, glutamate 276, cysteine 320, cysteine 408, cysteine 436, cysteine 461, glutamate 495, and lysine 497. Cysteine 408 carries the cysteine persulfide modification.

This sequence belongs to the HCP family. It depends on [2Fe-2S] cluster as a cofactor. Hybrid [4Fe-2O-2S] cluster is required as a cofactor.

The protein resides in the cytoplasm. It catalyses the reaction A + NH4(+) + H2O = hydroxylamine + AH2 + H(+). In terms of biological role, catalyzes the reduction of hydroxylamine to form NH(3) and H(2)O. This Photobacterium phosphoreum protein is Hydroxylamine reductase.